A 99-amino-acid chain; its full sequence is Large ribosomal subunit protein bL21 (99 aa).

Belongs to the bacterial ribosomal protein bL21 family. In terms of assembly, part of the 50S ribosomal subunit. Contacts protein L20.

This protein binds to 23S rRNA in the presence of protein L20. The sequence is that of Large ribosomal subunit protein bL21 from Mycoplasmopsis agalactiae (strain NCTC 10123 / CIP 59.7 / PG2) (Mycoplasma agalactiae).